A 1131-amino-acid chain; its full sequence is ATP-dependent helicase FUN30 (1131 aa).

A disordered region spans residues 1–70 (MSGSHSNDED…HTSKPLPSGS (70 aa)). Positions 16 to 36 (PETSSPTKVASSSPLKPTSPT) are enriched in polar residues. Positions 76–111 (VNLAREFPDFSQTLVQAVFKSNSFNLQSARERLTRL) are CUE-like region. Positions 114 to 141 (QRQNWTWNKNASPKKSETPPPVKKSLPL) are disordered. Ser232 carries the phosphoserine modification. Disordered stretches follow at residues 242 to 273 (KYGR…YTES) and 327 to 350 (NDKD…ANES). The span at 250-271 (NDEEEEESMMTDDDDASGDDYT) shows a compositional bias: acidic residues. At Ser369 the chain carries Phosphoserine. Residues 400 to 533 (DLMNLGEDDD…GDDDDDDDDE (134 aa)) are disordered. The span at 405-416 (GEDDDDDNDDGN) shows a compositional bias: acidic residues. Positions 417–432 (NDNNNSNNNNTAGADA) are enriched in low complexity. Basic and acidic residues predominate over residues 433–442 (TSKEKEDTKA). The residue at position 451 (Ser451) is a Phosphoserine. Over residues 480–533 (EDEDDDVDLEAIDDELPQSEHEDDDYEEEDEDYNDEEEDVEYDDGDDDDDDDDE) the composition is skewed to acidic residues. One can recognise a Helicase ATP-binding domain in the interval 584–752 (NLLYQNKMSC…MSLLEFIMPN (169 aa)). 597–604 (DDMGLGKT) contacts ATP. The DEGH box motif lies at 703-706 (DEGH). The region spanning 953 to 1108 (ALKKLLKTII…EDKKSQDVLE (156 aa)) is the Helicase C-terminal domain.

It belongs to the SNF2/RAD54 helicase family. In terms of assembly, homodimer.

It localises to the nucleus. Its subcellular location is the chromosome. The enzyme catalyses ATP + H2O = ADP + phosphate + H(+). In terms of biological role, DNA helicase that possesses intrinsic ATP-dependent nucleosome-remodeling activity and is both required for DNA repair and heterochromatin organization. Promotes DNA end resection of double-strand breaks (DSBs) following DNA damage: probably acts by weakening histone DNA interactions in nucleosomes flanking DSBs, facilitating single-stranded DNA (ssDNA) production by the EXO1 and SGS1 machinery. Promotes gene silencing at heterochromatin by regulating the chromatin structure within or around silent loci. Also required for heterochromatin organization at centromeres. This is ATP-dependent helicase FUN30 (FUN30) from Saccharomyces cerevisiae (strain ATCC 204508 / S288c) (Baker's yeast).